Here is a 420-residue protein sequence, read N- to C-terminus: Adenylosuccinate synthetase (420 aa).

Residues 11 to 17 (GDEGKGK) and 39 to 41 (GHT) each bind GTP. The Proton acceptor role is filled by Asp-12. Residues Asp-12 and Gly-39 each coordinate Mg(2+). Residues 12 to 15 (DEGK), 37 to 40 (NAGH), Thr-129, Arg-143, Asn-218, Thr-233, and Arg-297 each bind IMP. The active-site Proton donor is His-40. Residue 293–299 (VTTGRKR) participates in substrate binding. Residues Arg-299, 325–327 (KLD), and 407–409 (GTG) each bind GTP.

It belongs to the adenylosuccinate synthetase family. Homodimer. The cofactor is Mg(2+).

The protein localises to the cytoplasm. It catalyses the reaction IMP + L-aspartate + GTP = N(6)-(1,2-dicarboxyethyl)-AMP + GDP + phosphate + 2 H(+). It participates in purine metabolism; AMP biosynthesis via de novo pathway; AMP from IMP: step 1/2. Functionally, plays an important role in the de novo pathway and in the salvage pathway of purine nucleotide biosynthesis. Catalyzes the first committed step in the biosynthesis of AMP from IMP. This Uncinocarpus reesii (strain UAMH 1704) protein is Adenylosuccinate synthetase.